Here is a 258-residue protein sequence, read N- to C-terminus: MKISQIEKKKHLYLIKLDNGDSLTVTEDTIVTFMLSKHMVIDSQQWEDIKSFAQFSYGKSKALGFIAFQQRSQKQVQDYLLKHQISPDLIPSIIDSLKQGKWIDDQQYVDTYIRQNSLTGDKGPLLLKQKLMLKGIASQLIEPVLAQTDFSSIAQKAAEKIYQKYQHKLPSKALTDKIIQGLLNKGFSYDLAKGIVSQLSLEQDSQHIEDLLDQEFDKLLRKYSRRYDGYQLKQKLYQALYRKGYDSDDITTKLNDYF.

Belongs to the RecX family.

The protein localises to the cytoplasm. Functionally, modulates RecA activity. This is Regulatory protein RecX from Streptococcus equi subsp. equi (strain 4047).